A 304-amino-acid polypeptide reads, in one-letter code: Mitochondrial RNA-splicing protein MRS4 (304 aa).

3 Solcar repeats span residues 21–108, 118–200, and 207–300; these read APLH…CKAR, HQPM…ASKF, and YNPL…AKHF. 6 helical membrane passes run 23–41, 83–102, 120–139, 175–194, 209–228, and 275–288; these read LHSQ…HSLM, GVQS…FGTY, PMKT…ALMN, SYPT…FMIY, PLIH…ALTT, and GLKP…PATA.

It belongs to the mitochondrial carrier (TC 2.A.29) family.

The protein localises to the mitochondrion inner membrane. Functionally, MRS4 suppresses a mitochondrial splice defect in the first intron of the COB gene. It may act as a carrier, exerting its suppressor activity via modulation of solute concentrations in the mitochondrion (possibly of cations). Not essential. In Saccharomyces cerevisiae (strain ATCC 204508 / S288c) (Baker's yeast), this protein is Mitochondrial RNA-splicing protein MRS4 (MRS4).